The sequence spans 316 residues: 4-hydroxy-3-methylbut-2-enyl diphosphate reductase (316 aa).

C12 is a binding site for [4Fe-4S] cluster. H41 and H74 together coordinate (2E)-4-hydroxy-3-methylbut-2-enyl diphosphate. Residues H41 and H74 each contribute to the dimethylallyl diphosphate site. H41 and H74 together coordinate isopentenyl diphosphate. C96 is a binding site for [4Fe-4S] cluster. H124 is a (2E)-4-hydroxy-3-methylbut-2-enyl diphosphate binding site. H124 provides a ligand contact to dimethylallyl diphosphate. H124 is an isopentenyl diphosphate binding site. E126 serves as the catalytic Proton donor. Position 169 (T169) interacts with (2E)-4-hydroxy-3-methylbut-2-enyl diphosphate. C199 is a [4Fe-4S] cluster binding site. (2E)-4-hydroxy-3-methylbut-2-enyl diphosphate is bound by residues S227, S228, N229, and S271. Residues S227, S228, N229, and S271 each contribute to the dimethylallyl diphosphate site. Isopentenyl diphosphate is bound by residues S227, S228, N229, and S271.

This sequence belongs to the IspH family. Requires [4Fe-4S] cluster as cofactor.

It catalyses the reaction isopentenyl diphosphate + 2 oxidized [2Fe-2S]-[ferredoxin] + H2O = (2E)-4-hydroxy-3-methylbut-2-enyl diphosphate + 2 reduced [2Fe-2S]-[ferredoxin] + 2 H(+). The catalysed reaction is dimethylallyl diphosphate + 2 oxidized [2Fe-2S]-[ferredoxin] + H2O = (2E)-4-hydroxy-3-methylbut-2-enyl diphosphate + 2 reduced [2Fe-2S]-[ferredoxin] + 2 H(+). Its pathway is isoprenoid biosynthesis; dimethylallyl diphosphate biosynthesis; dimethylallyl diphosphate from (2E)-4-hydroxy-3-methylbutenyl diphosphate: step 1/1. It participates in isoprenoid biosynthesis; isopentenyl diphosphate biosynthesis via DXP pathway; isopentenyl diphosphate from 1-deoxy-D-xylulose 5-phosphate: step 6/6. In terms of biological role, catalyzes the conversion of 1-hydroxy-2-methyl-2-(E)-butenyl 4-diphosphate (HMBPP) into a mixture of isopentenyl diphosphate (IPP) and dimethylallyl diphosphate (DMAPP). Acts in the terminal step of the DOXP/MEP pathway for isoprenoid precursor biosynthesis. This is 4-hydroxy-3-methylbut-2-enyl diphosphate reductase from Xanthomonas campestris pv. campestris (strain ATCC 33913 / DSM 3586 / NCPPB 528 / LMG 568 / P 25).